Here is a 436-residue protein sequence, read N- to C-terminus: Trigger factor (436 aa).

The region spanning 161–246 (EDQLNIDFVG…VNTVSEPKLP (86 aa)) is the PPIase FKBP-type domain.

This sequence belongs to the FKBP-type PPIase family. Tig subfamily.

The protein resides in the cytoplasm. The catalysed reaction is [protein]-peptidylproline (omega=180) = [protein]-peptidylproline (omega=0). Involved in protein export. Acts as a chaperone by maintaining the newly synthesized protein in an open conformation. Functions as a peptidyl-prolyl cis-trans isomerase. The chain is Trigger factor from Pseudomonas savastanoi pv. phaseolicola (strain 1448A / Race 6) (Pseudomonas syringae pv. phaseolicola (strain 1448A / Race 6)).